Here is a 555-residue protein sequence, read N- to C-terminus: WRKY transcription factor WRKY24 (555 aa).

2 disordered regions span residues 133 to 183 (TAPA…AGAN) and 197 to 248 (SEMA…CTFP). Over residues 163–183 (QQQQQPWGYQQQPAGMDAGAN) the composition is skewed to low complexity. Positions 214–278 (SQRRSSDDGY…YKGTHNHAKP (65 aa)) form a DNA-binding region, WRKY 1. The Nuclear localization signal signature appears at 253-259 (KKKVERS). The interval 270 to 365 (KGTHNHAKPQ…DGEGISMAGN (96 aa)) is disordered. 2 stretches are compositionally biased toward polar residues: residues 277-294 (KPQN…QVLQ) and 310-320 (TAATPENSSAS). The span at 347 to 356 (DSKRWRKDGD) shows a compositional bias: basic and acidic residues. A DNA-binding region (WRKY 2) is located at residues 379–444 (SDIDILDDGY…YEGKHNHDVP (66 aa)). A transcription repression of gibberellic acid (GA)-induced promoters region spans residues 466–555 (HPYLPNQPPP…DDMFFQNSLY (90 aa)). Positions 514–555 (FDDARGSYMSQHQQQQRQNDAMHASRAKEEPGDDMFFQNSLY) are disordered.

This sequence belongs to the WRKY group II-a family. Expressed in aleurone cells. Mostly expressed in aleurone layers and leaves, and, to a lower extent, in roots, panicles and embryos.

Its subcellular location is the nucleus. Functionally, transcription activator. Interacts specifically with the W box (5'-(T)TGAC[CT]-3'), a frequently occurring elicitor-responsive cis-acting element. Negative regulator of both gibberellic acid (GA) and abscisic acid (ABA) signaling in aleurone cells, probably by interfering with GAM1, via the specific repression of GA- and ABA-induced promoters. In Oryza sativa subsp. japonica (Rice), this protein is WRKY transcription factor WRKY24.